A 241-amino-acid polypeptide reads, in one-letter code: Xyloglucan-specific endo-beta-1,4-glucanase 1 (241 aa).

An N-terminal signal peptide occupies residues 1 to 19; it reads MKGLLAGTIAAATFAVASA. E136 is a catalytic residue. N174 and N190 each carry an N-linked (GlcNAc...) asparagine glycan. Residue E222 is part of the active site.

This sequence belongs to the glycosyl hydrolase 12 (cellulase H) family. Interacts with host apoplastic glucanase inhibitor GIP2.

The enzyme catalyses xyloglucan + H2O = xyloglucan oligosaccharides.. Its activity is regulated as follows. The xyloglucanase activity is inhibited by the binding of the host apoplastic glucanase inhibitor GIP2. Its function is as follows. Glycoside hydrolase that exhibits xyloglucanase activity. Acts as an important virulence factor during P.parasitica infection of its host Nicotiana benthamiana. Also acts as a pathogen-associated molecular pattern (PAMP) in host species, where it can trigger defense responses including cell death. The PAMP activity is independent of its xyloglucanase activity. With paralog XLP1, is required to elevate apoplastic sugar during P.parasitica infection. The polypeptide is Xyloglucan-specific endo-beta-1,4-glucanase 1 (Phytophthora nicotianae (strain INRA-310) (Phytophthora parasitica)).